The following is a 328-amino-acid chain: GMP reductase (328 aa).

Cysteine 176 serves as the catalytic Thioimidate intermediate. 205-228 (IIADGGIRTHGDIAKSIRFGASMI) is a binding site for NADP(+).

Belongs to the IMPDH/GMPR family. GuaC type 2 subfamily.

The enzyme catalyses IMP + NH4(+) + NADP(+) = GMP + NADPH + 2 H(+). Its function is as follows. Catalyzes the irreversible NADPH-dependent deamination of GMP to IMP. It functions in the conversion of nucleobase, nucleoside and nucleotide derivatives of G to A nucleotides, and in maintaining the intracellular balance of A and G nucleotides. The polypeptide is GMP reductase (Streptococcus pneumoniae (strain ATCC 700669 / Spain 23F-1)).